We begin with the raw amino-acid sequence, 439 residues long: ATP-dependent RNA helicase RhlB (439 aa).

The Q motif motif lies at 9-37 (QKFADLPLCDEVKQALNENGFEHCTPIQA). The Helicase ATP-binding domain occupies 40 to 219 (LPVLLEKKDI…YDHMNDPVKV (180 aa)). ATP is bound at residue 53–60 (AQTGTGKT). Positions 165–168 (DEAD) match the DEAD box motif. Positions 243-390 (KLKLLHSLIE…VTSYDRDALI (148 aa)) constitute a Helicase C-terminal domain. Positions 394 to 439 (PPVKIHRKPHAGGRNLRDRNGSPRPSGSHRSGSGRPPRHDRTRRHS) are disordered. Residues 415-428 (SPRPSGSHRSGSGR) are compositionally biased toward low complexity. The span at 429 to 439 (PPRHDRTRRHS) shows a compositional bias: basic residues.

The protein belongs to the DEAD box helicase family. RhlB subfamily. In terms of assembly, component of the RNA degradosome, which is a multiprotein complex involved in RNA processing and mRNA degradation.

It localises to the cytoplasm. The catalysed reaction is ATP + H2O = ADP + phosphate + H(+). Its function is as follows. DEAD-box RNA helicase involved in RNA degradation. Has RNA-dependent ATPase activity and unwinds double-stranded RNA. This is ATP-dependent RNA helicase RhlB from Shewanella amazonensis (strain ATCC BAA-1098 / SB2B).